The chain runs to 1905 residues: Low-density lipoprotein receptor-related protein 4 (1905 aa).

A signal peptide spans 1–20 (MRRWWGALLLGALLCAHGTA). Over 21–1723 (SNLECACGRS…VPAAPGEGLH (1703 aa)) the chain is Extracellular. LDL-receptor class A domains lie at 26–67 (ACGR…DGCT), 70–106 (TCSPLDFHCDNGKCIRRSWVCDGDNDCEDDSDEQDCP), 109–144 (ECEEDEFPCQNGYCIRSLWHCDGDNDCGDNSDEQCD), 147–183 (KCSDKEFRCSDGSCIAEHWYCDGDTDCKDGSDEESCP), 190–226 (PCNLEEFQCAYGRCILDIYHCDGDDDCGDWSDESDCS), 230–266 (PCRSGEFMCDSGLCVNAGWRCDGDADCDDQSDERNCT), 269–305 (MCTAEQFRCRSGRCVRLSWRCDGEDDCADNSDEENCE), and 311–350 (QCASDQFLCWNGRCIGQRKLCNGVNDCGDNSDESPQQNCR). Disulfide bonds link Cys27–Cys44, Cys34–Cys57, Cys51–Cys66, Cys71–Cys83, Cys78–Cys96, Cys90–Cys105, Cys110–Cys122, Cys117–Cys135, Cys129–Cys143, Cys148–Cys160, Cys155–Cys173, Cys167–Cys182, Cys191–Cys203, Cys198–Cys216, Cys210–Cys225, Cys231–Cys243, Cys238–Cys256, Cys250–Cys265, Cys270–Cys282, Cys277–Cys295, Cys289–Cys304, Cys312–Cys324, Cys319–Cys337, Cys331–Cys349, Cys358–Cys369, Cys365–Cys378, Cys380–Cys393, Cys399–Cys409, Cys405–Cys418, and Cys420–Cys433. N-linked (GlcNAc...) asparagine glycosylation occurs at Asn264. Positions 354–394 (GEENCNVNNGGCAQKCQMIRGAVQCTCHTGYRLTEDGRTCQ) constitute an EGF-like 1; atypical domain. The region spanning 395–434 (DVNECAEEGYCSQGCTNSEGAFQCWCEAGYELRPDRRSCK) is the EGF-like 2; calcium-binding domain. LDL-receptor class B repeat units lie at residues 480-522 (ELVF…DWVH), 523-565 (DKLY…HPME), 566-609 (GTIY…DYAG), 610-652 (RRMY…FEDS), and 653-693 (LYWT…LHPQ). Asn498 carries an N-linked (GlcNAc...) asparagine glycan. Positions 698-737 (GKNRCGDNNGGCTHLCLPSGQNYTCACPTGFRKINSHACA) constitute an EGF-like 3 domain. 3 disulfides stabilise this stretch: Cys702/Cys713, Cys709/Cys722, and Cys724/Cys736. Asn719 is a glycosylation site (N-linked (GlcNAc...) asparagine). LDL-receptor class B repeat units lie at residues 785-827 (DHVY…DWVT), 828-870 (NKLY…EPMG), 871-914 (GYMY…DYGS), 915-956 (QRLY…LYGQ), and 957-998 (RIYW…FHRQ). Asn901 carries N-linked (GlcNAc...) asparagine glycosylation. Asn1077 carries an N-linked (GlcNAc...) asparagine glycan. 10 LDL-receptor class B repeats span residues 1093-1135 (GKVY…DAIG), 1136-1178 (RKVY…YHEM), 1179-1222 (GFMY…DKTS), 1223-1263 (SQLL…LLDS), 1264-1306 (YIYW…DRAQ), 1397-1439 (GKVY…DWVA), 1440-1482 (RNLY…FPRK), 1483-1526 (GYLF…DYDT), 1527-1568 (RRIY…QDRW), and 1569-1610 (IYWT…SPQR). N-linked (GlcNAc...) asparagine glycosylation is found at Asn1415 and Asn1467. Positions 1659–1696 (PRATSLNEKSPVLPNTLPTTLHSSTTRTRTSPEGAEGR) are disordered. Positions 1671-1690 (LPNTLPTTLHSSTTRTRTSP) are enriched in low complexity. The helical transmembrane segment at 1724–1746 (VSYAVGGLLSVLLILLVTAALML) threads the bilayer. Residues 1747–1905 (YRHRKSKFTD…ERKLSSESQV (159 aa)) lie on the Cytoplasmic side of the membrane. Positions 1853–1905 (SSGSLDDTETEQLLQEEQSECSSVHTATTPERRGSLPDTGWKHERKLSSESQV) are disordered. Positions 1872–1881 (ECSSVHTATT) are enriched in polar residues. Positions 1882–1905 (PERRGSLPDTGWKHERKLSSESQV) are enriched in basic and acidic residues.

The protein belongs to the LDLR family. Homooligomer. Interacts with MUSK; the heterodimer forms an AGRIN receptor complex that binds AGRIN resulting in activation of MUSK. Interacts (via the extracellular domain) with SOST; the interaction facilitates the inhibition of Wnt signaling. Interacts with MESD; the interaction promotes glycosylation of LRP4 and its cell-surface expression. In terms of processing, N-glycosylation is required for cell surface location. In terms of tissue distribution, expressed in different regions of the brain, mainly in the olfactory bulb, at lower level in the cerebral cortex and hippocampus.

The protein resides in the cell membrane. Functionally, mediates SOST-dependent inhibition of bone formation. Functions as a specific facilitator of SOST-mediated inhibition of Wnt signaling. Plays a key role in the formation and the maintenance of the neuromuscular junction (NMJ), the synapse between motor neuron and skeletal muscle. Directly binds AGRIN and recruits it to the MUSK signaling complex. Mediates the AGRIN-induced phosphorylation of MUSK, the kinase of the complex. The activation of MUSK in myotubes induces the formation of NMJ by regulating different processes including the transcription of specific genes and the clustering of AChR in the postsynaptic membrane. Alternatively, may be involved in the negative regulation of the canonical Wnt signaling pathway, being able to antagonize the LRP6-mediated activation of this pathway. More generally, has been proposed to function as a cell surface endocytic receptor binding and internalizing extracellular ligands for degradation by lysosomes. Plays an essential role in the process of digit differentiation. This is Low-density lipoprotein receptor-related protein 4 (Lrp4) from Rattus norvegicus (Rat).